Here is a 91-residue protein sequence, read N- to C-terminus: Small ribosomal subunit protein uS19 (91 aa).

Belongs to the universal ribosomal protein uS19 family.

Functionally, protein S19 forms a complex with S13 that binds strongly to the 16S ribosomal RNA. The protein is Small ribosomal subunit protein uS19 of Lactiplantibacillus plantarum (strain ATCC BAA-793 / NCIMB 8826 / WCFS1) (Lactobacillus plantarum).